A 534-amino-acid chain; its full sequence is CTP synthase (534 aa).

The amidoligase domain stretch occupies residues 1 to 266 (MKTKFIFVTG…DEQVVEKLNI (266 aa)). A CTP-binding site is contributed by S14. Position 14 (S14) interacts with UTP. ATP-binding positions include 15–20 (SIGKGL) and D72. Mg(2+) contacts are provided by D72 and E140. Residues 147–149 (DIE), 187–192 (KTKPTQ), and K223 contribute to the CTP site. UTP-binding positions include 187 to 192 (KTKPTQ) and K223. One can recognise a Glutamine amidotransferase type-1 domain in the interval 292 to 534 (RIAIVGKYVN…IAAALHNIKA (243 aa)). L-glutamine is bound at residue G354. C381 (nucleophile; for glutamine hydrolysis) is an active-site residue. Residues 382–385 (LGMQ), E405, and R462 each bind L-glutamine. Residues H507 and E509 contribute to the active site.

Belongs to the CTP synthase family. As to quaternary structure, homotetramer.

It catalyses the reaction UTP + L-glutamine + ATP + H2O = CTP + L-glutamate + ADP + phosphate + 2 H(+). The catalysed reaction is L-glutamine + H2O = L-glutamate + NH4(+). The enzyme catalyses UTP + NH4(+) + ATP = CTP + ADP + phosphate + 2 H(+). It functions in the pathway pyrimidine metabolism; CTP biosynthesis via de novo pathway; CTP from UDP: step 2/2. With respect to regulation, allosterically activated by GTP, when glutamine is the substrate; GTP has no effect on the reaction when ammonia is the substrate. The allosteric effector GTP functions by stabilizing the protein conformation that binds the tetrahedral intermediate(s) formed during glutamine hydrolysis. Inhibited by the product CTP, via allosteric rather than competitive inhibition. In terms of biological role, catalyzes the ATP-dependent amination of UTP to CTP with either L-glutamine or ammonia as the source of nitrogen. Regulates intracellular CTP levels through interactions with the four ribonucleotide triphosphates. The chain is CTP synthase from Geotalea uraniireducens (strain Rf4) (Geobacter uraniireducens).